We begin with the raw amino-acid sequence, 402 residues long: Acetate kinase (402 aa).

Position 7 (asparagine 7) interacts with Mg(2+). An ATP-binding site is contributed by lysine 14. A substrate-binding site is contributed by arginine 95. Catalysis depends on aspartate 152, which acts as the Proton donor/acceptor. ATP-binding positions include 212–216 (HLGNG), 286–288 (DMR), and 334–338 (GIGEN). Mg(2+) is bound at residue glutamate 388.

This sequence belongs to the acetokinase family. As to quaternary structure, homodimer. The cofactor is Mg(2+). Requires Mn(2+) as cofactor.

It localises to the cytoplasm. The enzyme catalyses acetate + ATP = acetyl phosphate + ADP. It participates in metabolic intermediate biosynthesis; acetyl-CoA biosynthesis; acetyl-CoA from acetate: step 1/2. Its function is as follows. Catalyzes the formation of acetyl phosphate from acetate and ATP. Can also catalyze the reverse reaction. This chain is Acetate kinase, found in Oleidesulfovibrio alaskensis (strain ATCC BAA-1058 / DSM 17464 / G20) (Desulfovibrio alaskensis).